Here is a 302-residue protein sequence, read N- to C-terminus: Fluoroacetate dehalogenase (302 aa).

An AB hydrolase-1 domain is found at 32-270 (PPLLLLHGFP…LDVWRKWASD (239 aa)). Residue D110 is the Nucleophile of the active site. Fluoroacetate-binding residues include R111, R114, H155, W156, and Y219. Residue H280 is the Proton acceptor of the active site.

Belongs to the AB hydrolase superfamily. Epoxide hydrolase family. Homodimer.

The catalysed reaction is a haloacetate + H2O = a halide anion + glycolate + H(+). It catalyses the reaction fluoroacetate + H2O = fluoride + glycolate + H(+). The enzyme catalyses chloroacetate + H2O = glycolate + chloride + H(+). Its function is as follows. Catalyzes the hydrolytic defluorination of fluoroacetate to produce glycolate. Has lower activity towards chloroacetate and bromoacetate. The sequence is that of Fluoroacetate dehalogenase from Rhodopseudomonas palustris (strain ATCC BAA-98 / CGA009).